The chain runs to 524 residues: Alkaline phosphatase, tissue-nonspecific isozyme (524 aa).

The signal sequence occupies residues 1–17; sequence MISPFLVLAIGTCLTNS. Asp-60 is a Mg(2+) binding site. Zn(2+)-binding residues include Asp-60 and Ser-110. The active-site Phosphoserine intermediate is the Ser-110. Ser-110 carries the post-translational modification Phosphoserine. A disulfide bond links Cys-139 and Cys-201. Asn-140 carries an N-linked (GlcNAc...) asparagine glycan. A Mg(2+)-binding site is contributed by Thr-173. An N-linked (GlcNAc...) asparagine glycan is attached at Asn-230. Ca(2+) is bound at residue Glu-235. A glycan (N-linked (GlcNAc...) asparagine) is linked at Asn-271. Phe-290 and Glu-291 together coordinate Ca(2+). N-linked (GlcNAc...) asparagine glycosylation occurs at Asn-303. Position 306 (Asp-306) interacts with Ca(2+). Glu-332 provides a ligand contact to Mg(2+). Positions 337, 341, 378, and 379 each coordinate Zn(2+). A glycan (N-linked (GlcNAc...) asparagine) is linked at Asn-430. Residue His-454 participates in Zn(2+) binding. Cys-489 and Cys-497 form a disulfide bridge. Ser-501 is lipidated: GPI-anchor amidated serine. The propeptide at 502-524 is removed in mature form; that stretch reads SAGSLAAGPLLLALALYPLSVLF.

Belongs to the alkaline phosphatase family. As to quaternary structure, homodimer. Mg(2+) serves as cofactor. It depends on Zn(2+) as a cofactor. Requires Ca(2+) as cofactor. N-glycosylated.

The protein localises to the cell membrane. The protein resides in the extracellular vesicle membrane. It localises to the mitochondrion membrane. Its subcellular location is the mitochondrion intermembrane space. It catalyses the reaction a phosphate monoester + H2O = an alcohol + phosphate. The enzyme catalyses diphosphate + H2O = 2 phosphate + H(+). It carries out the reaction pyridoxal 5'-phosphate + H2O = pyridoxal + phosphate. The catalysed reaction is phosphoethanolamine + H2O = ethanolamine + phosphate. It catalyses the reaction N-phosphocreatine + H2O = creatine + phosphate. The enzyme catalyses ATP + H2O = ADP + phosphate + H(+). It carries out the reaction ADP + H2O = AMP + phosphate + H(+). The catalysed reaction is AMP + H2O = adenosine + phosphate. With respect to regulation, phosphatase activity is specifically inhibited by 5-((5-chloro-2-methoxyphenyl)sulfonamido)nicotinamide (SBI-425). In terms of biological role, alkaline phosphatase that metabolizes various phosphate compounds and plays a key role in skeletal mineralization and adaptive thermogenesis. Has broad substrate specificity and can hydrolyze a considerable variety of compounds: however, only a few substrates, such as diphosphate (inorganic pyrophosphate; PPi), pyridoxal 5'-phosphate (PLP) and N-phosphocreatine are natural substrates. Plays an essential role in skeletal and dental mineralization via its ability to hydrolyze extracellular diphosphate, a potent mineralization inhibitor, to phosphate: it thereby promotes hydroxyapatite crystal formation and increases inorganic phosphate concentration. Acts in a non-redundant manner with PHOSPHO1 in skeletal mineralization: while PHOSPHO1 mediates the initiation of hydroxyapatite crystallization in the matrix vesicles (MVs), ALPL/TNAP catalyzes the spread of hydroxyapatite crystallization in the extracellular matrix. Also promotes dephosphorylation of osteopontin (SSP1), an inhibitor of hydroxyapatite crystallization in its phosphorylated state; it is however unclear whether ALPL/TNAP mediates SSP1 dephosphorylation via a direct or indirect manner. Catalyzes dephosphorylation of PLP to pyridoxal (PL), the transportable form of vitamin B6, in order to provide a sufficient amount of PLP in the brain, an essential cofactor for enzymes catalyzing the synthesis of diverse neurotransmitters. Additionally, also able to mediate ATP degradation in a stepwise manner to adenosine, thereby regulating the availability of ligands for purinergic receptors. Also capable of dephosphorylating microbial products, such as lipopolysaccharides (LPS) as well as other phosphorylated small-molecules, such as poly-inosine:cytosine (poly I:C). Acts as a key regulator of adaptive thermogenesis as part of the futile creatine cycle: localizes to the mitochondria of thermogenic fat cells and acts by mediating hydrolysis of N-phosphocreatine to initiate a futile cycle of creatine dephosphorylation and phosphorylation. During the futile creatine cycle, creatine and N-phosphocreatine are in a futile cycle, which dissipates the high energy charge of N-phosphocreatine as heat without performing any mechanical or chemical work. The polypeptide is Alkaline phosphatase, tissue-nonspecific isozyme (Homo sapiens (Human)).